The following is a 384-amino-acid chain: MELQEVLHMNGGEGDTSYAKNSFYNLFLIRVKPILEQCIQELLRANLPNINKCIKVADLGCASGPNTLLTVRDIVQSIDKVGQEKKNELERPTIQIFLNDLFQNDFNSVFKSLPSFYRKLEKENGCKIGSCLIGAMPGSFYGRLFPEESMHFLHSCYCLHWLSQVPSGLVTELGISANKGCIYSSKASRPPIQKAYLDQFTKDFTTFLRIHSEELISRGRMLLTWICKEDEFENPNSIDLLEMSINDLVIEGHLEEEKLDSFNVPIYAPSTEEVKCIVEEEGSFEILYLETFKVPYDAGFSIDDDYQGRSHSPVSCDEHARAAHVASVVRSIFEPIVASHFGEAILPDLSHRIAKNAAKVLRSGKGFYDSVIISLAKKPEKADM.

S-adenosyl-L-homocysteine-binding residues include tyrosine 18, cysteine 61, asparagine 66, aspartate 100, leucine 101, serine 139, phenylalanine 140, and cysteine 156. Theobromine is bound at residue tyrosine 157. An S-adenosyl-L-homocysteine-binding site is contributed by cysteine 158. The theobromine site is built by histidine 160 and tryptophan 161. Asparagine 178 serves as a coordination point for Mg(2+). Residue serine 237 participates in theobromine binding. Residues aspartate 260, phenylalanine 262, and asparagine 263 each contribute to the Mg(2+) site. Tyrosine 368 lines the theobromine pocket.

The protein belongs to the methyltransferase superfamily. Type-7 methyltransferase family. Mg(2+) is required as a cofactor. As to expression, highly expressed in developing endosperm and immature fruits (grains). Detected in young leaves and flower buds, but not in mature fruits.

It carries out the reaction theobromine + S-adenosyl-L-methionine = caffeine + S-adenosyl-L-homocysteine + H(+). The catalysed reaction is 1,7-dimethylxanthine + S-adenosyl-L-methionine = caffeine + S-adenosyl-L-homocysteine + H(+). The enzyme catalyses 7-methylxanthine + S-adenosyl-L-methionine = theobromine + S-adenosyl-L-homocysteine + H(+). It functions in the pathway alkaloid biosynthesis. Involved in the biosynthesis of caffeine. Catalyzes the conversion of 7-methylxanthine to caffeine, likely via theobromine as an intermediate. In Coffea arabica (Arabian coffee), this protein is 3,7-dimethylxanthine N-methyltransferase 1.